The chain runs to 300 residues: 3-hydroxy-3-isohexenylglutaryl-CoA/hydroxy-methylglutaryl-CoA lyase (300 aa).

In terms of domain architecture, Pyruvate carboxyltransferase spans 7-274 (VRLVEVGPRD…HTGVDMHALV (268 aa)). Arg15 is a substrate binding site. A divalent metal cation-binding residues include Asp16, His207, and His209. Cys240 is a catalytic residue. Asn249 serves as a coordination point for a divalent metal cation.

This sequence belongs to the HMG-CoA lyase family. As to quaternary structure, homodimer. Requires Mg(2+) as cofactor. Mn(2+) is required as a cofactor.

The enzyme catalyses 3-hydroxy-3-(4-methylpent-3-en-1-yl)glutaryl-CoA = 7-methyl-3-oxooct-6-enoyl-CoA + acetate. The catalysed reaction is (3S)-3-hydroxy-3-methylglutaryl-CoA = acetoacetate + acetyl-CoA. The protein operates within metabolic intermediate metabolism; (S)-3-hydroxy-3-methylglutaryl-CoA degradation; acetoacetate from (S)-3-hydroxy-3-methylglutaryl-CoA: step 1/1. Functionally, involved in the L-leucine, isovalerate and acyclic monoterpene catabolism. Catalyzes the cleavage of 3-hydroxy-3-methylglutaryl-CoA (HMG-CoA) to yield acetyl-CoA and acetoacetate. It can also catalyze the cleavage of 3-hydroxy-3-isohexenylglutaryl-CoA (HIHG_CoA) to yield 7-methyl-3-oxooct-6-enoyl-CoA and acetate. This is 3-hydroxy-3-isohexenylglutaryl-CoA/hydroxy-methylglutaryl-CoA lyase from Pseudomonas aeruginosa (strain ATCC 15692 / DSM 22644 / CIP 104116 / JCM 14847 / LMG 12228 / 1C / PRS 101 / PAO1).